The following is a 123-amino-acid chain: Small ribosomal subunit protein uS12 (123 aa).

Asp-89 carries the 3-methylthioaspartic acid modification.

This sequence belongs to the universal ribosomal protein uS12 family. Part of the 30S ribosomal subunit. Contacts proteins S8 and S17. May interact with IF1 in the 30S initiation complex.

With S4 and S5 plays an important role in translational accuracy. In terms of biological role, interacts with and stabilizes bases of the 16S rRNA that are involved in tRNA selection in the A site and with the mRNA backbone. Located at the interface of the 30S and 50S subunits, it traverses the body of the 30S subunit contacting proteins on the other side and probably holding the rRNA structure together. The combined cluster of proteins S8, S12 and S17 appears to hold together the shoulder and platform of the 30S subunit. The protein is Small ribosomal subunit protein uS12 of Rhizobium leguminosarum bv. trifolii (strain WSM2304).